A 411-amino-acid chain; its full sequence is Peptidase T (411 aa).

Residue histidine 78 coordinates Zn(2+). The active site involves aspartate 80. Residue aspartate 140 coordinates Zn(2+). Catalysis depends on glutamate 173, which acts as the Proton acceptor. Residues glutamate 174, aspartate 196, and histidine 379 each coordinate Zn(2+).

It belongs to the peptidase M20B family. It depends on Zn(2+) as a cofactor.

It is found in the cytoplasm. It catalyses the reaction Release of the N-terminal residue from a tripeptide.. Functionally, cleaves the N-terminal amino acid of tripeptides. This chain is Peptidase T, found in Yersinia pestis bv. Antiqua (strain Antiqua).